Consider the following 149-residue polypeptide: MAAKVEPFWIRKTLDQLDTQEWESLCDGCGLCCLQKLEDEEDNSVYYTRIACKLLDLKTCQCSDYANRRASVPDCIQLTPGQADEFKWLPPTCGYRLVSEGKDLPLWHHLVCGDRTAVHHERISQSGRMLSEKNVAEDDWEDYLIFRAG.

It belongs to the UPF0260 family.

The chain is UPF0260 protein PSPTO_3918 from Pseudomonas syringae pv. tomato (strain ATCC BAA-871 / DC3000).